A 1196-amino-acid polypeptide reads, in one-letter code: Sorbin and SH3 domain-containing protein 2 (1196 aa).

Disordered stretches follow at residues 25–57 (VQSS…ETLN) and 75–95 (PNLQ…GNSG). Phosphoserine occurs at positions 27, 28, and 40. Residues 83–92 (PTQSHITING) are compositionally biased toward polar residues. Phosphoserine is present on residues serine 130 and serine 143. Position 148 is an alanine amide (methionine 148). Residues 166-227 (VIKAPHYPGI…YNTPYTYNAG (62 aa)) enclose the SoHo domain. Positions 235-247 (AQSHPAAKTQTYR) are enriched in polar residues. Disordered regions lie at residues 235–314 (AQSH…EPGK) and 329–407 (SSID…GDDS). Basic and acidic residues-rich tracts occupy residues 252–262 (SHSDNGTDAFK) and 276–312 (RPRD…EYEP). Serine 254 bears the Phosphoserine mark. Positions 329-343 (SSIDRSLERPSSSAS) are enriched in polar residues. Serine 334, serine 340, serine 343, and serine 354 each carry phosphoserine. Phosphothreonine is present on threonine 372. Serine 382 carries the post-translational modification Phosphoserine. The span at 382 to 399 (SSSTFTTSFISSSPSSPS) shows a compositional bias: low complexity. Residue threonine 387 is modified to Phosphothreonine. Residues serine 392, serine 393, serine 394, serine 396, serine 397, serine 399, serine 478, serine 589, serine 592, serine 645, serine 648, serine 844, and serine 938 each carry the phosphoserine modification. The tract at residues 929-958 (QDHESPRSYSSTLTDLGRSVSRERRGTPEK) is disordered. The span at 948 to 958 (VSRERRGTPEK) shows a compositional bias: basic and acidic residues. SH3 domains follow at residues 959–1018 (EVKL…KLTP) and 1034–1095 (GEIG…VVKR). A phosphoserine mark is found at serine 1113 and serine 1119. Positions 1137 to 1196 (GGGEPFQALYNYTPRNEDELELRESDVVDVMEKCDDGWFVGTSRRTKFFGTFPGNYVKRL) constitute an SH3 3 domain.

Interacts with ABL1/c-Abl, ABL2/v-Abl/Arg, ACTN, CBL and PALLD. Interacts with ABL, CBL, DNM1, DNM2, FLOT1, AFDN, PTK2B/PYK2, SAPAP, SPTAN1, SYNJ1, SYNJ2, VCL/vinculin and WASF. Interacts with PTPN12 and WASF1 via its SH3 domains; this interaction may mediate the partial PTPN12 and WASF1 translocation to focal adhesion sites. Post-translationally, ubiquitinated by CBL. As to expression, expressed in brain; found in synapses in cerebellum.

Its subcellular location is the cytoplasm. The protein localises to the perinuclear region. The protein resides in the apical cell membrane. It is found in the cell junction. It localises to the focal adhesion. Its subcellular location is the cell projection. The protein localises to the lamellipodium. Functionally, adapter protein that plays a role in the assembling of signaling complexes, being a link between ABL kinases and actin cytoskeleton. Can form complex with ABL1 and CBL, thus promoting ubiquitination and degradation of ABL1. May play a role in the regulation of pancreatic cell adhesion, possibly by acting on WASF1 phosphorylation, enhancing phosphorylation by ABL1, as well as dephosphorylation by PTPN12. Isoform 2 increases water and sodium absorption in the intestine and gall-bladder. In Rattus norvegicus (Rat), this protein is Sorbin and SH3 domain-containing protein 2 (Sorbs2).